A 634-amino-acid polypeptide reads, in one-letter code: DNA-directed RNA polymerase subunit gamma (634 aa).

4 residues coordinate Zn(2+): Cys-74, Cys-76, Cys-89, and Cys-92. Mg(2+) is bound by residues Asp-471, Asp-473, and Asp-475.

This sequence belongs to the RNA polymerase beta' chain family. RpoC1 subfamily. In cyanobacteria the RNAP catalytic core is composed of 2 alpha, 1 beta, 1 beta', 1 gamma and 1 omega subunit. When a sigma factor is associated with the core the holoenzyme is formed, which can initiate transcription. Requires Mg(2+) as cofactor. The cofactor is Zn(2+).

The enzyme catalyses RNA(n) + a ribonucleoside 5'-triphosphate = RNA(n+1) + diphosphate. Functionally, DNA-dependent RNA polymerase catalyzes the transcription of DNA into RNA using the four ribonucleoside triphosphates as substrates. This is DNA-directed RNA polymerase subunit gamma from Synechococcus sp. (strain RCC307).